A 278-amino-acid polypeptide reads, in one-letter code: Protein mtd-1 (278 aa).

The first 17 residues, 1 to 17, serve as a signal peptide directing secretion; the sequence is MRSSLLLLVFFLSIGWA. Over 18–254 the chain is Extracellular; the sequence is RYCVHNEKSW…EMLEEIEARK (237 aa). Residues Asn-40, Asn-73, Asn-163, and Asn-190 are each glycosylated (N-linked (GlcNAc...) asparagine). A helical membrane pass occupies residues 255 to 271; it reads VPVDSSAPVNIILSIAF. At 272–278 the chain is on the cytoplasmic side; the sequence is SIFLIHF.

It localises to the cell membrane. In terms of biological role, plays a role in mechanosensory transduction (touch sensitivity). The sequence is that of Protein mtd-1 from Caenorhabditis elegans.